Reading from the N-terminus, the 410-residue chain is Homeobox protein Hox-A3a (410 aa).

The interval 79 to 126 is disordered; it reads VTDTSDNKQPPTAPSGPSSPSSLNQIPNIDSAAKNPVHVSPTPSTRKH. The Antp-type hexapeptide signature appears at 127-132; that stretch reads IFPWMK. A DNA-binding region (homeobox) is located at residues 163 to 222; sequence SKRARTAYTSAQLVELEKEFHFNRYLCRPRRVEMANLLNLTERQIKIWFQNRRMKYKKDQ. A disordered region spans residues 222-249; it reads QKGLGMMPSPGAQSPHSPVSLSSGGGGG.

The protein belongs to the Antp homeobox family.

The protein localises to the nucleus. Functionally, sequence-specific transcription factor which is part of a developmental regulatory system that provides cells with specific positional identities on the anterior-posterior axis. The polypeptide is Homeobox protein Hox-A3a (hoxa3a) (Danio rerio (Zebrafish)).